The following is an 82-amino-acid chain: ATP synthase subunit c (82 aa).

The next 2 helical transmembrane spans lie at 7 to 27 (AASV…PGIG) and 57 to 77 (FAFM…LLFA).

It belongs to the ATPase C chain family. F-type ATPases have 2 components, F(1) - the catalytic core - and F(0) - the membrane proton channel. F(1) has five subunits: alpha(3), beta(3), gamma(1), delta(1), epsilon(1). F(0) has four main subunits: a(1), b(1), b'(1) and c(10-14). The alpha and beta chains form an alternating ring which encloses part of the gamma chain. F(1) is attached to F(0) by a central stalk formed by the gamma and epsilon chains, while a peripheral stalk is formed by the delta, b and b' chains.

It localises to the cellular thylakoid membrane. Its function is as follows. F(1)F(0) ATP synthase produces ATP from ADP in the presence of a proton or sodium gradient. F-type ATPases consist of two structural domains, F(1) containing the extramembraneous catalytic core and F(0) containing the membrane proton channel, linked together by a central stalk and a peripheral stalk. During catalysis, ATP synthesis in the catalytic domain of F(1) is coupled via a rotary mechanism of the central stalk subunits to proton translocation. Functionally, key component of the F(0) channel; it plays a direct role in translocation across the membrane. A homomeric c-ring of between 10-14 subunits forms the central stalk rotor element with the F(1) delta and epsilon subunits. The protein is ATP synthase subunit c of Prochlorococcus marinus (strain NATL1A).